Here is a 248-residue protein sequence, read N- to C-terminus: tRNA pseudouridine synthase A (248 aa).

Aspartate 53 functions as the Nucleophile in the catalytic mechanism. Tyrosine 116 is a substrate binding site.

The protein belongs to the tRNA pseudouridine synthase TruA family. Homodimer.

It carries out the reaction uridine(38/39/40) in tRNA = pseudouridine(38/39/40) in tRNA. Functionally, formation of pseudouridine at positions 38, 39 and 40 in the anticodon stem and loop of transfer RNAs. The protein is tRNA pseudouridine synthase A of Helicobacter hepaticus (strain ATCC 51449 / 3B1).